A 367-amino-acid polypeptide reads, in one-letter code: Dihydroorotate dehydrogenase (quinone) (367 aa).

FMN is bound by residues 67–71 (AGFDK) and threonine 91. Lysine 71 is a binding site for substrate. 116 to 120 (NRLGF) serves as a coordination point for substrate. FMN is bound by residues asparagine 145 and asparagine 178. Asparagine 178 provides a ligand contact to substrate. Catalysis depends on serine 181, which acts as the Nucleophile. Position 183 (asparagine 183) interacts with substrate. The FMN site is built by lysine 219 and threonine 247. 248–249 (NT) is a substrate binding site. FMN is bound by residues glycine 269, glycine 298, and 319–320 (YT).

Belongs to the dihydroorotate dehydrogenase family. Type 2 subfamily. Monomer. FMN is required as a cofactor.

It is found in the cell membrane. It carries out the reaction (S)-dihydroorotate + a quinone = orotate + a quinol. The protein operates within pyrimidine metabolism; UMP biosynthesis via de novo pathway; orotate from (S)-dihydroorotate (quinone route): step 1/1. Its function is as follows. Catalyzes the conversion of dihydroorotate to orotate with quinone as electron acceptor. This is Dihydroorotate dehydrogenase (quinone) from Roseiflexus castenholzii (strain DSM 13941 / HLO8).